A 221-amino-acid polypeptide reads, in one-letter code: UPF0502 protein PLES_16071 (221 aa).

The protein belongs to the UPF0502 family.

This Pseudomonas aeruginosa (strain LESB58) protein is UPF0502 protein PLES_16071.